The chain runs to 955 residues: Aminopeptidase A (955 aa).

Topologically, residues 1–17 (MDIEDKSSKMHCMKGKH) are cytoplasmic. Residues 18-38 (VAIICGVVIAVGLILGLGLGL) form a helical; Signal-anchor for type II membrane protein membrane-spanning segment. Residues 39-955 (GLKPEACNPP…LENSEQPNFV (917 aa)) lie on the Extracellular side of the membrane. Residues 49–69 (EDNGLLSTKPPTTSTPNVTNP) form a disordered region. Over residues 55-69 (STKPPTTSTPNVTNP) the composition is skewed to low complexity. 3 N-linked (GlcNAc...) asparagine glycosylation sites follow: Asn-65, Asn-118, and Asn-192. Glu-218 contacts substrate. Residues Asn-312, Asn-319, and Asn-335 are each glycosylated (N-linked (GlcNAc...) asparagine). A substrate-binding site is contributed by 352–356 (GAMEN). His-388 provides a ligand contact to Zn(2+). Catalysis depends on Glu-389, which acts as the Proton acceptor. Zn(2+) contacts are provided by His-392 and Glu-411. N-linked (GlcNAc...) asparagine glycans are attached at residues Asn-458, Asn-547, Asn-584, Asn-592, Asn-647, Asn-674, Asn-681, Asn-759, Asn-766, Asn-823, and Asn-836. Arg-882 is a binding site for substrate.

It belongs to the peptidase M1 family. In terms of assembly, homodimer; disulfide-linked. Zn(2+) serves as cofactor.

It is found in the cell membrane. It carries out the reaction Release of N-terminal glutamate (and to a lesser extent aspartate) from a peptide.. The partially purified protein is inhibited by the aminopeptidase competitive inhibitors amastatin (Leu and acidic inhibitor), and bestatin (Leu inhibitor), by chelating agents EDTA, and 1,10-Phenanthroline, as well as by Zn(2+) ions. Substrate specificity is modulated by Ca(2+), Ba(2+), and Mn(2+) ions which enhances the enzymatic activity for cleavage of acidic residues. Functionally, venom protein that cleaves N-terminal acidic residues from peptides with high potency in presence of calcium. It may have several roles in venom including alteration of blood pressure by cleaving circulating angiotensin-2, general degradation of host tissue, increase of permeability to other venom components, and/or processing of other toxins in the venom. The chain is Aminopeptidase A from Gloydius brevicauda (Korean slamosa snake).